An 836-amino-acid chain; its full sequence is Protein translocase subunit SecA (836 aa).

Residues glutamine 85, glycine 103–threonine 107, and aspartate 492 contribute to the ATP site. Residues cysteine 820, cysteine 822, cysteine 831, and cysteine 832 each coordinate Zn(2+).

This sequence belongs to the SecA family. As to quaternary structure, monomer and homodimer. Part of the essential Sec protein translocation apparatus which comprises SecA, SecYEG and auxiliary proteins SecDF. Other proteins may also be involved. Zn(2+) is required as a cofactor.

Its subcellular location is the cell membrane. The protein localises to the cytoplasm. It catalyses the reaction ATP + H2O + cellular proteinSide 1 = ADP + phosphate + cellular proteinSide 2.. In terms of biological role, part of the Sec protein translocase complex. Interacts with the SecYEG preprotein conducting channel. Has a central role in coupling the hydrolysis of ATP to the transfer of proteins into and across the cell membrane, serving as an ATP-driven molecular motor driving the stepwise translocation of polypeptide chains across the membrane. The polypeptide is Protein translocase subunit SecA (Clostridium botulinum (strain Eklund 17B / Type B)).